The following is a 122-amino-acid chain: Serum amyloid A-3 protein (122 aa).

Residues 1 to 18 form the signal peptide; that stretch reads MKLSIGIIFCFLILGVNS. Positions 88-122 are disordered; it reads GRGAEDSKADQEANQWGRSGNDPNHFRPKGLPDKY. Residues 99-109 show a composition bias toward polar residues; sequence EANQWGRSGND.

It belongs to the SAA family. As to expression, expressed by the liver; secreted in plasma. Expressed in synovial fibroblasts.

It is found in the secreted. Its function is as follows. Major acute phase reactant. Apolipoprotein of the HDL complex. In vitro exhibits antimicrobial activity against Escherichia coli, Streptococcus uberis and Pseudomonas aeruginosa. In Oryctolagus cuniculus (Rabbit), this protein is Serum amyloid A-3 protein (SAA3).